A 134-amino-acid chain; its full sequence is ATP synthase epsilon chain (134 aa).

The protein belongs to the ATPase epsilon chain family. F-type ATPases have 2 components, CF(1) - the catalytic core - and CF(0) - the membrane proton channel. CF(1) has five subunits: alpha(3), beta(3), gamma(1), delta(1), epsilon(1). CF(0) has three main subunits: a, b and c.

It is found in the cell membrane. Its function is as follows. Produces ATP from ADP in the presence of a proton gradient across the membrane. This Pelotomaculum thermopropionicum (strain DSM 13744 / JCM 10971 / SI) protein is ATP synthase epsilon chain.